The primary structure comprises 640 residues: Threonine--tRNA ligase (640 aa).

The TGS domain occupies M1–T59. The catalytic stretch occupies residues D240–P531. C332, H383, and H508 together coordinate Zn(2+).

The protein belongs to the class-II aminoacyl-tRNA synthetase family. Homodimer. Zn(2+) serves as cofactor.

It localises to the cytoplasm. It catalyses the reaction tRNA(Thr) + L-threonine + ATP = L-threonyl-tRNA(Thr) + AMP + diphosphate + H(+). In terms of biological role, catalyzes the attachment of threonine to tRNA(Thr) in a two-step reaction: L-threonine is first activated by ATP to form Thr-AMP and then transferred to the acceptor end of tRNA(Thr). Also edits incorrectly charged L-seryl-tRNA(Thr). This Thermotoga maritima (strain ATCC 43589 / DSM 3109 / JCM 10099 / NBRC 100826 / MSB8) protein is Threonine--tRNA ligase.